Consider the following 260-residue polypeptide: tRNA pseudouridine synthase A (260 aa).

The Nucleophile role is filled by D52. Y110 serves as a coordination point for substrate.

Belongs to the tRNA pseudouridine synthase TruA family. In terms of assembly, homodimer.

The catalysed reaction is uridine(38/39/40) in tRNA = pseudouridine(38/39/40) in tRNA. Its function is as follows. Formation of pseudouridine at positions 38, 39 and 40 in the anticodon stem and loop of transfer RNAs. This Thiobacillus denitrificans (strain ATCC 25259 / T1) protein is tRNA pseudouridine synthase A.